Reading from the N-terminus, the 128-residue chain is Azurin (128 aa).

The 128-residue stretch at 1 to 128 (AECKVTVDST…SMMKGTVTVK (128 aa)) folds into the Plastocyanin-like domain. Cys3 and Cys26 are oxidised to a cystine. Positions 46, 112, 117, and 121 each coordinate Cu cation.

Its subcellular location is the periplasm. Its function is as follows. Transfers electrons from cytochrome c551 to cytochrome oxidase. The polypeptide is Azurin (Pseudomonas fluorescens biotype A).